Reading from the N-terminus, the 442-residue chain is U11/U12 small nuclear ribonucleoprotein 65 kDa protein (442 aa).

One can recognise an RRM 1 domain in the interval 28–102 (VTLLVRHLPD…KVLQVQRANK (75 aa)). 3 disordered regions span residues 101 to 138 (NKPN…QILS), 200 to 242 (LALP…GRKR), and 290 to 317 (SKVT…DSNL). Residues 102–116 (KPNDNKKSRQIEESV) show a composition bias toward basic and acidic residues. Polar residues predominate over residues 117-136 (TKGNAFSTVSTNNDSKSGQI). The segment covering 200-209 (LALPTPPLPK) has biased composition (pro residues). Positions 297–307 (YKEESENEDPA) are enriched in acidic residues. An RRM 2 domain is found at 352-434 (VVLYIKNLAK…KPMIIQFGRT (83 aa)).

Component of the U11/U12 snRNPs that are part of the U12-type spliceosome. Forms a complex with U12 snRNA. As to expression, ubiquitous.

The protein localises to the nucleus. In terms of biological role, component of minor spliceosome required for U12-type intron splicing and alternative splicing of many introns. Binds specifically to U12 snRNA, which is necessary for branch-point site recognition. Required for normal plant development. The protein is U11/U12 small nuclear ribonucleoprotein 65 kDa protein (SNRNP65) of Arabidopsis thaliana (Mouse-ear cress).